We begin with the raw amino-acid sequence, 252 residues long: 5-oxoprolinase subunit A (252 aa).

Belongs to the LamB/PxpA family. As to quaternary structure, forms a complex composed of PxpA, PxpB and PxpC.

It carries out the reaction 5-oxo-L-proline + ATP + 2 H2O = L-glutamate + ADP + phosphate + H(+). In terms of biological role, catalyzes the cleavage of 5-oxoproline to form L-glutamate coupled to the hydrolysis of ATP to ADP and inorganic phosphate. This Corynebacterium glutamicum (strain ATCC 13032 / DSM 20300 / JCM 1318 / BCRC 11384 / CCUG 27702 / LMG 3730 / NBRC 12168 / NCIMB 10025 / NRRL B-2784 / 534) protein is 5-oxoprolinase subunit A.